We begin with the raw amino-acid sequence, 149 residues long: Calmodulin (149 aa).

Ala2 carries the post-translational modification N-acetylalanine. EF-hand domains lie at 8-43, 44-79, 81-116, and 117-149; these read EQIA…LGQN, PTEA…KMKE, DSEE…LGEK, and LTDE…MTSK. Ca(2+) contacts are provided by Asp21, Asp23, Asp25, Thr27, Glu32, Asp57, Asp59, Asn61, Thr63, Glu68, Asp94, Asp96, Asn98, and Glu105. The residue at position 116 (Lys116) is an N6,N6,N6-trimethyllysine. Ca(2+) is bound by residues Asp130, Asp132, Asp134, Gln136, and Glu141.

This sequence belongs to the calmodulin family.

Functionally, calmodulin mediates the control of a large number of enzymes, ion channels and other proteins by Ca(2+). Among the enzymes to be stimulated by the calmodulin-Ca(2+) complex are a number of protein kinases and phosphatases. This is Calmodulin from Suberites domuncula (Sponge).